A 165-amino-acid chain; its full sequence is Cyclic pyranopterin monophosphate synthase (165 aa).

Substrate contacts are provided by residues 78–80 and 116–117; these read LCH and ME. Residue D131 is part of the active site.

This sequence belongs to the MoaC family. As to quaternary structure, homohexamer; trimer of dimers.

The catalysed reaction is (8S)-3',8-cyclo-7,8-dihydroguanosine 5'-triphosphate = cyclic pyranopterin phosphate + diphosphate. Its pathway is cofactor biosynthesis; molybdopterin biosynthesis. In terms of biological role, catalyzes the conversion of (8S)-3',8-cyclo-7,8-dihydroguanosine 5'-triphosphate to cyclic pyranopterin monophosphate (cPMP). In Sinorhizobium fredii (strain NBRC 101917 / NGR234), this protein is Cyclic pyranopterin monophosphate synthase.